A 347-amino-acid chain; its full sequence is Core-capsid bridging protein (347 aa).

The tract at residues 290-320 is disordered; it reads GYRGTTFQRRATAPSRRRGPSRRRRRRKATL. Residues 304-318 are compositionally biased toward basic residues; that stretch reads SRRRGPSRRRRRRKA.

This sequence belongs to the adenoviridae core-capsid bridging protein family. As to quaternary structure, monomer. Homodimer. Exists in equilibrium between monomers and dimers in solution. Interacts with the histone-like nucleoprotein; this interactions bridge the virus core to the capsid. Interacts with core protein X; this interactions bridge the virus core to the capsid. Interacts with the endosome lysis protein VI; this interactions bridge the virus core to the capsid. Interacts with the peripentonal hexons. Interacts with host NPM1; this interaction might play a role in virus assembly.

The protein resides in the virion. Its subcellular location is the host nucleus. It localises to the host nucleolus. In terms of biological role, associates loosely with the viral DNA to form an outer shell around the nucleoprotein-DNA complex and links it with the capsid by binding the endosome lysis protein. Dissociates from the viral genome during entry. Might be involved in nuclear capsid assembly of the viral particles through its association with NPM1/nucleophosmin. The polypeptide is Core-capsid bridging protein (Homo sapiens (Human)).